We begin with the raw amino-acid sequence, 362 residues long: Somatostatin receptor type 5 (362 aa).

Polar residues predominate over residues 1–10; sequence MEPLSLTSTP. The tract at residues 1-24 is disordered; it reads MEPLSLTSTPSWNASAASSSSHNW. Over 1–35 the chain is Extracellular; that stretch reads MEPLSLTSTPSWNASAASSSSHNWSLVDPVSPMGA. Residues 11–24 are compositionally biased toward low complexity; sequence SWNASAASSSSHNW. 2 N-linked (GlcNAc...) asparagine glycosylation sites follow: Asn-13 and Asn-23. A helical transmembrane segment spans residues 36–63; that stretch reads RAVLVPVLYLLVCTVGLGGNTLVIYVVL. At 64–73 the chain is on the cytoplasmic side; it reads RYAKMKTVTN. Residues 74 to 99 traverse the membrane as a helical segment; that stretch reads VYILNLAVADVLFMLGLPFLATQNAV. Topologically, residues 100-110 are extracellular; the sequence is SYWPFGSFLCR. Cys-109 and Cys-184 are oxidised to a cystine. Residues 111–132 form a helical membrane-spanning segment; the sequence is LVMTLDGINQFTSIFCLMVMSV. Residues 133–154 are Cytoplasmic-facing; sequence DRYLAVVHPLRSARWRRPRVAK. A helical transmembrane segment spans residues 155-175; sequence LASAAVWVFSLLMSLPLLVFA. Residues 176 to 195 are Extracellular-facing; sequence DVQEGWGTCNLSWPEPVGLW. The N-linked (GlcNAc...) asparagine glycan is linked to Asn-185. The helical transmembrane segment at 196–220 threads the bilayer; that stretch reads GAAFITYTSVLGFFGPLLVICLCYL. Over 221 to 246 the chain is Cytoplasmic; it reads LIVVKVKAAGMRVGSSRRRRSERKVT. A helical membrane pass occupies residues 247–272; that stretch reads RMVVVVVLVFVGCWLPFFIVNIVNLA. The Extracellular portion of the chain corresponds to 273 to 282; that stretch reads FTLPEEPTSA. The helical transmembrane segment at 283 to 307 threads the bilayer; it reads GLYFFVVVLSYANSCANPLLYGFLS. Residues 308 to 362 are Cytoplasmic-facing; sequence DNFRQSFRKALCLRRGYGVEDADAIEPRPDKSGRPQTTLPTRSCEANGLMQTSRL. Cys-319 carries the S-palmitoyl cysteine; by ZDHHC5 lipid modification. The interval 330 to 362 is disordered; the sequence is DAIEPRPDKSGRPQTTLPTRSCEANGLMQTSRL.

Belongs to the G-protein coupled receptor 1 family. In terms of assembly, heterodimer with SSTR2. Heterodimerization with SSTR2 increases cell growth inhibition activity of SSTR2. In terms of processing, palmitoylated at Cys-319 by ZDHHC5, but not ZDHHC8. Palmitoylation creates an additional intracellular loop which is thought to be important for efficient coupling to G-proteins and may target the protein to lipid rafts. As to expression, expressed in adult brain but not in liver, heart, spleen, or kidney.

It localises to the cell membrane. Receptor for somatostatin-28. The activity of this receptor is mediated by G proteins which inhibit adenylyl cyclase. Increases cell growth inhibition activity of SSTR2 following heterodimerization. This chain is Somatostatin receptor type 5 (Sstr5), found in Mus musculus (Mouse).